The sequence spans 84 residues: NAD(P)H-quinone oxidoreductase subunit O (84 aa).

This sequence belongs to the complex I NdhO subunit family. NDH-1 can be composed of about 15 different subunits; different subcomplexes with different compositions have been identified which probably have different functions.

It localises to the cellular thylakoid membrane. The enzyme catalyses a plastoquinone + NADH + (n+1) H(+)(in) = a plastoquinol + NAD(+) + n H(+)(out). It carries out the reaction a plastoquinone + NADPH + (n+1) H(+)(in) = a plastoquinol + NADP(+) + n H(+)(out). Its function is as follows. NDH-1 shuttles electrons from an unknown electron donor, via FMN and iron-sulfur (Fe-S) centers, to quinones in the respiratory and/or the photosynthetic chain. The immediate electron acceptor for the enzyme in this species is believed to be plastoquinone. Couples the redox reaction to proton translocation, and thus conserves the redox energy in a proton gradient. Cyanobacterial NDH-1 also plays a role in inorganic carbon-concentration. The sequence is that of NAD(P)H-quinone oxidoreductase subunit O from Parasynechococcus marenigrum (strain WH8102).